We begin with the raw amino-acid sequence, 335 residues long: tRNA (adenine(58)-N(1))-methyltransferase catalytic subunit TRM61 (335 aa).

S-adenosyl-L-methionine contacts are provided by residues 114 to 116 (SAS), E135, R140, 162 to 163 (DV), and D183. Positions 271 to 281 (VMKKGPSEEPP) are enriched in basic and acidic residues. The disordered stretch occupies residues 271–302 (VMKKGPSEEPPAKLQKTDNGYKTPKKSTKVKE).

The protein belongs to the class I-like SAM-binding methyltransferase superfamily. TRM61 family. Heterotetramer; composed of two copies of TRM6 and two copies of TRM61.

It localises to the nucleus. The enzyme catalyses adenosine(58) in tRNA + S-adenosyl-L-methionine = N(1)-methyladenosine(58) in tRNA + S-adenosyl-L-homocysteine + H(+). Functionally, catalytic subunit of tRNA (adenine-N(1)-)-methyltransferase, which catalyzes the formation of N(1)-methyladenine at position 58 (m1A58) in initiator methionyl-tRNA. The sequence is that of tRNA (adenine(58)-N(1))-methyltransferase catalytic subunit TRM61 (TRM61) from Candida albicans (strain SC5314 / ATCC MYA-2876) (Yeast).